Consider the following 407-residue polypeptide: Serine/threonine transporter SstT (407 aa).

A run of 9 helical transmembrane segments spans residues 11 to 31, 43 to 63, 82 to 102, 141 to 161, 192 to 212, 216 to 236, 298 to 318, 339 to 359, and 363 to 383; these read IIHG…VILA, FLGD…VFVL, IISL…LLSF, ALMT…GIAL, LGIF…ALAG, LLMV…PLIV, MGGA…TLGV, ASGV…LFGI, and IAMQ…SAET.

The protein belongs to the dicarboxylate/amino acid:cation symporter (DAACS) (TC 2.A.23) family.

Its subcellular location is the cell inner membrane. It catalyses the reaction L-serine(in) + Na(+)(in) = L-serine(out) + Na(+)(out). The catalysed reaction is L-threonine(in) + Na(+)(in) = L-threonine(out) + Na(+)(out). In terms of biological role, involved in the import of serine and threonine into the cell, with the concomitant import of sodium (symport system). This chain is Serine/threonine transporter SstT, found in Shewanella denitrificans (strain OS217 / ATCC BAA-1090 / DSM 15013).